Reading from the N-terminus, the 727-residue chain is Broad-complex core protein isoforms 1/2/3/4/5 (727 aa).

One can recognise a BTB domain in the interval 32–97; the sequence is VDVTLACEGR…IYHGEVNVHQ (66 aa). The segment covering 135-149 has biased composition (polar residues); that stretch reads NSGGRTPLNTHTQSL. Disordered regions lie at residues 135-185, 218-378, 445-496, 532-583, and 604-626; these read NSGG…SLPS, RGSD…IGDG, INNS…RPTA, PQQQ…ANTP, and STSGSANSSLNNSNSTLNTSGGL. Residues 227 to 238 are compositionally biased toward low complexity; that stretch reads SGAVGSGSNNNS. Over residues 281-298 the composition is skewed to gly residues; sequence TGNGNSGNGNGNGNGASN. The span at 341-355 shows a compositional bias: basic and acidic residues; it reads NDEHSNDSTGEHDAN. Composition is skewed to low complexity over residues 445 to 460, 475 to 495, and 533 to 568; these read INNSITNNNNNNNNNN, TPSPTTTTLTTPTTTTPTRPT, and QQQQQQQQQHQMSQQQQQQQQQQQQQGNSSSGQQQQ. C2H2-type zinc fingers lie at residues 636–659 and 666–689; these read FRCNPCNKNLSSLTRLKRHIQNVH and PVCNICKRVYSSLNSLRNHKSIYH. Residues 694–727 are disordered; that stretch reads QPKQEPGVGATQAAANSFYHQQHQQQQLNHHSSS. Low complexity predominate over residues 713–727; that stretch reads HQQHQQQQLNHHSSS.

The protein localises to the nucleus. Functionally, broad-complex proteins are required for puffing and transcription of salivary gland late genes during metamorphosis. The sequence is that of Broad-complex core protein isoforms 1/2/3/4/5 (br) from Drosophila melanogaster (Fruit fly).